A 978-amino-acid chain; its full sequence is Retinoblastoma-related protein 2 (978 aa).

A domain A region spans residues Thr385–Leu585. The segment at Thr385 to Pro832 is pocket. Residues Val586–Val704 form a spacer region. Residues Gln616–Pro645 are disordered. The tract at residues Val705 to Pro832 is domain B. Disordered stretches follow at residues Ser841–His878 and Val947–Ser978. The span at Thr850–Ser864 shows a compositional bias: polar residues. Residues Ser958–Ser971 show a composition bias toward low complexity.

It belongs to the retinoblastoma protein (RB) family.

The protein resides in the nucleus. Its function is as follows. Regulator of biological processes that recruits a histone deacetylase to control gene transcription. May play a role in the entry into mitosis, negatively regulating the cell proliferation. Formation of stable complexes with geminiviridae replication-associated proteins may create a cellular environment which favors viral DNA replication. The sequence is that of Retinoblastoma-related protein 2 (RBR2) from Oryza sativa subsp. japonica (Rice).